Here is a 257-residue protein sequence, read N- to C-terminus: Beta-fibrinogenase mucrofibrase-1 (257 aa).

Residues 1–18 (MVLIRVLANLLILQLSYA) form the signal peptide. Positions 19–24 (QKSSEL) are excised as a propeptide. Residues 25–248 (VIGGDECNIN…HLDWIKGIIA (224 aa)) enclose the Peptidase S1 domain. 6 disulfides stabilise this stretch: Cys-31/Cys-162, Cys-49/Cys-65, Cys-97/Cys-255, Cys-141/Cys-209, Cys-173/Cys-188, and Cys-199/Cys-224. Residues His-64 and Asp-109 each act as charge relay system in the active site. Ser-203 (charge relay system) is an active-site residue.

It belongs to the peptidase S1 family. Snake venom subfamily. As to quaternary structure, monomer. Expressed by the venom gland.

It is found in the secreted. In terms of biological role, snake venom serine protease with strong beta-fibrinogenolytic activities, angiotensin I (AGT)-degrading activities and strong kallikrein-like activities in vitro, releasing bradykinin from kininogen (KNG1). Intravenous injection strongly lowers blood pressure in experimental rats, which may be explained by the action on angiotensin I and kininogen. This Protobothrops mucrosquamatus (Taiwan habu) protein is Beta-fibrinogenase mucrofibrase-1.